Here is a 580-residue protein sequence, read N- to C-terminus: Arginine--tRNA ligase (580 aa).

Positions 131–141 (ANPTGPMHVGH) match the 'HIGH' region motif.

It belongs to the class-I aminoacyl-tRNA synthetase family. In terms of assembly, monomer.

The protein localises to the cytoplasm. It carries out the reaction tRNA(Arg) + L-arginine + ATP = L-arginyl-tRNA(Arg) + AMP + diphosphate. The chain is Arginine--tRNA ligase from Cereibacter sphaeroides (strain ATCC 17023 / DSM 158 / JCM 6121 / CCUG 31486 / LMG 2827 / NBRC 12203 / NCIMB 8253 / ATH 2.4.1.) (Rhodobacter sphaeroides).